The sequence spans 1107 residues: RNA2 polyprotein (1107 aa).

The disordered stretch occupies residues 553-584; the sequence is SRSMRFKSPSDLWSRPSVDGGSTSTQPPSKGS. Residues 572–581 show a composition bias toward polar residues; the sequence is GGSTSTQPPS.

The protein belongs to the nepoviruses RNA2 polyprotein family. In terms of processing, specific enzymatic cleavages in vivo by the P1 encoded 3C-like protease yield mature proteins.

It localises to the host cell junction. The protein resides in the host plasmodesma. The protein localises to the host cytoplasm. It is found in the host nucleus. Its subcellular location is the virion. Its function is as follows. Implicated in RNA2 replication. Could also be required for nematode transmission of the virus. Functionally, transports viral genome to neighboring plant cells directly through plasmosdesmata, without any budding. The movement protein allows efficient cell to cell propagation, by bypassing the host cell wall barrier. Acts by forming a tubular structure at the host plasmodesmata, enlarging it enough to allow free passage of virion capsids. The protein is RNA2 polyprotein of Raspberry ringspot virus (strain S) (RpRSV).